The primary structure comprises 385 residues: Beta sliding clamp (385 aa).

Belongs to the beta sliding clamp family. In terms of assembly, forms a ring-shaped head-to-tail homodimer around DNA which binds and tethers DNA polymerases and other proteins to the DNA. The DNA replisome complex has a single clamp-loading complex (3 tau and 1 each of delta, delta', psi and chi subunits) which binds 3 Pol III cores (1 core on the leading strand and 2 on the lagging strand) each with a beta sliding clamp dimer. Additional proteins in the replisome are other copies of gamma, psi and chi, Ssb, DNA helicase and RNA primase.

The protein resides in the cytoplasm. Confers DNA tethering and processivity to DNA polymerases and other proteins. Acts as a clamp, forming a ring around DNA (a reaction catalyzed by the clamp-loading complex) which diffuses in an ATP-independent manner freely and bidirectionally along dsDNA. Initially characterized for its ability to contact the catalytic subunit of DNA polymerase III (Pol III), a complex, multichain enzyme responsible for most of the replicative synthesis in bacteria; Pol III exhibits 3'-5' exonuclease proofreading activity. The beta chain is required for initiation of replication as well as for processivity of DNA replication. This is Beta sliding clamp (dnaN) from Borreliella burgdorferi (strain ATCC 35210 / DSM 4680 / CIP 102532 / B31) (Borrelia burgdorferi).